Consider the following 709-residue polypeptide: Early transcription factor 82 kDa subunit (709 aa).

Belongs to the poxviridae VETF large subunit family. In terms of assembly, heterodimer of a 70 kDa and a 82 kDa subunit. Part of the early transcription complex composed of ETF, RAP94, and the DNA-directed RNA polymerase.

Its subcellular location is the virion. In terms of biological role, acts with RNA polymerase to initiate transcription from early gene promoters. Is recruited by the RPO-associated protein of 94 kDa (RAP94) to form the early transcription complex, which also contains the core RNA polymerase. ETF heterodimer binds to early gene promoters. The protein is Early transcription factor 82 kDa subunit (VETFL) of Vertebrata (FPV).